Consider the following 237-residue polypeptide: tRNA (guanine-N(7)-)-methyltransferase (237 aa).

S-adenosyl-L-methionine contacts are provided by glutamate 67, glutamate 92, aspartate 119, and aspartate 142. Aspartate 142 is an active-site residue. Substrate contacts are provided by residues lysine 146, aspartate 178, and 215 to 218 (TKFE).

Belongs to the class I-like SAM-binding methyltransferase superfamily. TrmB family.

The enzyme catalyses guanosine(46) in tRNA + S-adenosyl-L-methionine = N(7)-methylguanosine(46) in tRNA + S-adenosyl-L-homocysteine. It functions in the pathway tRNA modification; N(7)-methylguanine-tRNA biosynthesis. In terms of biological role, catalyzes the formation of N(7)-methylguanine at position 46 (m7G46) in tRNA. This Aeromonas hydrophila subsp. hydrophila (strain ATCC 7966 / DSM 30187 / BCRC 13018 / CCUG 14551 / JCM 1027 / KCTC 2358 / NCIMB 9240 / NCTC 8049) protein is tRNA (guanine-N(7)-)-methyltransferase.